Here is a 275-residue protein sequence, read N- to C-terminus: LIM/homeobox protein Awh (275 aa).

2 LIM zinc-binding domains span residues 6–67 (RSCA…NFGA) and 68–129 (KCSK…TVEG). Phosphothreonine is present on threonine 126. Residues 148–207 (TKRVRTTFTEEQLQVLQANFQIDSNPDGQDLERIASVTGLSKRVTQVWFQNSRARQKKHI) constitute a DNA-binding region (homeobox). The interval 253 to 275 (PTHESSMDELSQDSSVHCMPSEV) is disordered.

As to expression, first detected in neuroblasts in stage 9 embryos. Expressed in all 10 abdominal segments and in the labial segment during early embryogenesis. Expressed in the stage 14 developing epithelium. By embryonic stage 16, expression is refined to the abdominal histoblasts and salivary gland imaginal ring cells. Expressed in both larval and imaginal cells between the salivary gland and the salivary gland imaginal ring, in late third instar larvae. Also expressed in specific areas of the larval wing, leg and eye-antennal disks.

The protein resides in the nucleus. Probable transcription factor. Required for the establishment of a subset of imaginal tissues: the abdominal histoblasts and the salivary gland imaginal rings. In Drosophila melanogaster (Fruit fly), this protein is LIM/homeobox protein Awh.